We begin with the raw amino-acid sequence, 45 residues long: Temporin-SHf (45 aa).

An N-terminal signal peptide occupies residues 1–10; it reads FLGTINLSLC. Positions 11-35 are excised as a propeptide; it reads EEERDADEEERRDEPDESNVEVKKR. F43 is modified (phenylalanine amide).

Belongs to the frog skin active peptide (FSAP) family. Temporin subfamily.

The protein resides in the secreted. The protein localises to the target cell membrane. In terms of biological role, non-amphipathic alpha-helical antimicrobial peptide with potent activity against some Gram-positive bacteria (including methicillin-resistant Staphylococcus aureus (MRSA)), weak activity against Gram-negative bacteria and no activity against fungi. Permeabilizates membranes through a detergent-like effect probably via the carpet mechanism. More precisely, it strongly and selectively perturbs anionic bilayers membranes by interacting with the polar headgroups and the glycerol backbone region of the phospholipids, hence disrupting the acyl chain packing of the bilayer. Is not active against Leishmania (promastigote and axenic amastigote forms). Does not show hemolytic activity. Does not show toxicity for human THP-1-derived macrophages. This Pelophylax saharicus (Sahara frog) protein is Temporin-SHf.